Reading from the N-terminus, the 262-residue chain is MIHSTAKIHPSSIIEEGAKIGENVVIGPFCIVGSDVQIGKGTTLHSHVVVKGVTTIGEDNQIFQFASIGEVNQDLKYQGEPTKTIIGHRNRIRESVTIHRGTVQGGGVTRIGDDNLLMINAHIAHDCQIGNRCILANNATLAGHVELGDFVIVGGMSAIHQFVIVGAHVMLGGGSMVSQDVPPYVMAQGNHARPFGVNIEGLKRRGFDKPTLHAIRNVYKLIYRSGKTLEEVIPEIENYAQTESAVSFFLDFFNRSTRGIIR.

It belongs to the transferase hexapeptide repeat family. LpxA subfamily. In terms of assembly, homotrimer.

It localises to the cytoplasm. It catalyses the reaction a (3R)-hydroxyacyl-[ACP] + UDP-N-acetyl-alpha-D-glucosamine = a UDP-3-O-[(3R)-3-hydroxyacyl]-N-acetyl-alpha-D-glucosamine + holo-[ACP]. It participates in glycolipid biosynthesis; lipid IV(A) biosynthesis; lipid IV(A) from (3R)-3-hydroxytetradecanoyl-[acyl-carrier-protein] and UDP-N-acetyl-alpha-D-glucosamine: step 1/6. Involved in the biosynthesis of lipid A, a phosphorylated glycolipid that anchors the lipopolysaccharide to the outer membrane of the cell. The polypeptide is Acyl-[acyl-carrier-protein]--UDP-N-acetylglucosamine O-acyltransferase (Histophilus somni (strain 129Pt) (Haemophilus somnus)).